The following is a 427-amino-acid chain: Trigger factor (427 aa).

Residues 165–250 (GDTVVIDFEG…LHEIQEQVPA (86 aa)) enclose the PPIase FKBP-type domain.

Belongs to the FKBP-type PPIase family. Tig subfamily.

The protein localises to the cytoplasm. The enzyme catalyses [protein]-peptidylproline (omega=180) = [protein]-peptidylproline (omega=0). Involved in protein export. Acts as a chaperone by maintaining the newly synthesized protein in an open conformation. Functions as a peptidyl-prolyl cis-trans isomerase. The sequence is that of Trigger factor from Sulfurovum sp. (strain NBC37-1).